The primary structure comprises 220 residues: Kinetochore protein Spc25 (220 aa).

Residues 79–114 are a coiled coil; sequence HLTQEVEAIKLRNLAMKDQIKQQKMLNNQRKNEIME.

Belongs to the SPC25 family. As to quaternary structure, component of the Ndc80 complex, which is composed of Ndc80, Nuf2 and Spc25.

Its subcellular location is the nucleus. The protein localises to the chromosome. The protein resides in the centromere. It is found in the kinetochore. Acts as a component of the essential kinetochore-associated Ndc80 complex, which is required for chromosome segregation and spindle checkpoint activity during meiosis and mitosis. Required for kinetochore integrity and the organization of stable microtubule binding sites in the outer plate of the kinetochore. Participates in SAC signaling that responds specifically to disruptions in spindle microtubule dynamics. The NDC80 complex synergistically enhances the affinity of the SKA1 complex for microtubules and may allow the NDC80 complex to track depolymerizing microtubules. In Drosophila orena (Fruit fly), this protein is Kinetochore protein Spc25.